A 118-amino-acid polypeptide reads, in one-letter code: UPF0212 protein HQ_2663A (118 aa).

The protein belongs to the UPF0212 family.

This Haloquadratum walsbyi (strain DSM 16790 / HBSQ001) protein is UPF0212 protein HQ_2663A.